The sequence spans 110 residues: Large ribosomal subunit protein uL22 (110 aa).

A compositionally biased stretch (basic residues) spans 85 to 95 (RGTASKIRKPT). Residues 85 to 110 (RGTASKIRKPTSHVMVEVSKAQKKEA) are disordered.

It belongs to the universal ribosomal protein uL22 family. Part of the 50S ribosomal subunit.

Functionally, this protein binds specifically to 23S rRNA; its binding is stimulated by other ribosomal proteins, e.g. L4, L17, and L20. It is important during the early stages of 50S assembly. It makes multiple contacts with different domains of the 23S rRNA in the assembled 50S subunit and ribosome. The globular domain of the protein is located near the polypeptide exit tunnel on the outside of the subunit, while an extended beta-hairpin is found that lines the wall of the exit tunnel in the center of the 70S ribosome. The sequence is that of Large ribosomal subunit protein uL22 from Campylobacter curvus (strain 525.92).